Consider the following 141-residue polypeptide: Hemoglobin subunit alpha (141 aa).

The Globin domain maps to 1 to 141 (VLSPADKTNV…VSTVLTSKYR (141 aa)). The residue at position 3 (Ser3) is a Phosphoserine. Lys7 carries the N6-succinyllysine modification. A Phosphothreonine modification is found at Thr8. Lys11 is subject to N6-succinyllysine. Ser35 is subject to Phosphoserine. An N6-succinyllysine modification is found at Lys40. Ser49 carries the post-translational modification Phosphoserine. Residue His58 participates in O2 binding. Residue His87 participates in heme b binding. Ser102 carries the post-translational modification Phosphoserine. Thr108 carries the post-translational modification Phosphothreonine. Ser124 is subject to Phosphoserine. 2 positions are modified to phosphothreonine: Thr134 and Thr137. Position 138 is a phosphoserine (Ser138).

Belongs to the globin family. In terms of assembly, heterotetramer of two alpha chains and two beta chains. In terms of tissue distribution, red blood cells.

Involved in oxygen transport from the lung to the various peripheral tissues. Functionally, hemopressin acts as an antagonist peptide of the cannabinoid receptor CNR1. Hemopressin-binding efficiently blocks cannabinoid receptor CNR1 and subsequent signaling. In Eulemur fulvus fulvus (Brown lemur), this protein is Hemoglobin subunit alpha (HBA).